A 255-amino-acid polypeptide reads, in one-letter code: Alkaline ceramidase (255 aa).

Residues 1-28 are Lumenal-facing; sequence MADGISSFWGPVTSTIECCEMNYAYSSY. Residues 29–49 form a helical membrane-spanning segment; the sequence is IAEFYNTISNVPGILLALIGL. Residues 50 to 60 are Cytoplasmic-facing; sequence VNALRQRFEKR. A helical membrane pass occupies residues 61–81; the sequence is FSILHISNMILAIGSMLYHAT. Residue histidine 79 participates in Zn(2+) binding. The Lumenal segment spans residues 82 to 91; the sequence is LQHVQQQSDE. Residues 92 to 112 traverse the membrane as a helical segment; that stretch reads TPMVWEILLYMYILYSPDWHY. Topologically, residues 113 to 118 are cytoplasmic; the sequence is RSTMPT. 2 helical membrane passes run 119–139 and 140–160; these read FLFL…FGIG and FKVH…KYYI. At 161 to 169 the chain is on the cytoplasmic side; sequence HTEDTAAKR. The chain crosses the membrane as a helical span at residues 170–192; sequence IAKWYVATILVGSICWFCDRVFC. Residues 193–205 lie on the Lumenal side of the membrane; that stretch reads KTISQWPVNPQGH. The Zn(2+) site is built by histidine 205 and histidine 209. The chain crosses the membrane as a helical span at residues 206-226; that stretch reads ALWHVFMSFNSYCANTFLMFC. The Cytoplasmic segment spans residues 227–255; the sequence is RAQQRGWNPKVKYFLGVLPYVKIEKPKTQ.

Belongs to the alkaline ceramidase family. It depends on Zn(2+) as a cofactor. As to expression, mostly expressed in roots, shoot meristems and pollen, and, to a lower extent, in mature leaves.

It localises to the endoplasmic reticulum membrane. It is found in the golgi apparatus membrane. Functionally, hydrolyzes only phytoceramide into phytosphingosine and free fatty acid. Does not have reverse activity. Affects plant morphogenesis. Required for the formation of wax layer that ensure cuticle permeability. Implicated in abscisic acid (ABA)-mediated stomatal closure. Involved in both biotic and abiotic stresses. Promotes salt resistance and defenses responses toward pathogenic bacteria (e.g. P.syringae) and against the fungal toxin fumonisin B1 (FB1). The chain is Alkaline ceramidase from Arabidopsis thaliana (Mouse-ear cress).